The following is a 365-amino-acid chain: Uroporphyrinogen decarboxylase (365 aa).

Residues 27–31 (RQAGR), Asp77, Tyr154, Thr209, and His327 contribute to the substrate site.

It belongs to the uroporphyrinogen decarboxylase family. Homodimer.

It is found in the cytoplasm. The catalysed reaction is uroporphyrinogen III + 4 H(+) = coproporphyrinogen III + 4 CO2. It functions in the pathway porphyrin-containing compound metabolism; protoporphyrin-IX biosynthesis; coproporphyrinogen-III from 5-aminolevulinate: step 4/4. Its function is as follows. Catalyzes the decarboxylation of four acetate groups of uroporphyrinogen-III to yield coproporphyrinogen-III. The sequence is that of Uroporphyrinogen decarboxylase from Nitrosospira multiformis (strain ATCC 25196 / NCIMB 11849 / C 71).